We begin with the raw amino-acid sequence, 228 residues long: Lipoprotein-releasing system ATP-binding protein LolD (228 aa).

Residues L6–G228 enclose the ABC transporter domain. G42–S49 lines the ATP pocket.

Belongs to the ABC transporter superfamily. Lipoprotein translocase (TC 3.A.1.125) family. As to quaternary structure, the complex is composed of two ATP-binding proteins (LolD) and two transmembrane proteins (LolC and LolE).

It is found in the cell inner membrane. Part of the ABC transporter complex LolCDE involved in the translocation of mature outer membrane-directed lipoproteins, from the inner membrane to the periplasmic chaperone, LolA. Responsible for the formation of the LolA-lipoprotein complex in an ATP-dependent manner. The chain is Lipoprotein-releasing system ATP-binding protein LolD from Idiomarina loihiensis (strain ATCC BAA-735 / DSM 15497 / L2-TR).